A 216-amino-acid chain; its full sequence is Pyridoxine/pyridoxamine 5'-phosphate oxidase (216 aa).

Substrate is bound by residues 12–15 (RREY) and K70. Residues 65–70 (RLVLLK), 80–81 (YT), R86, K87, and Q109 each bind FMN. The substrate site is built by Y127, R131, and S135. Residues 144–145 (QS) and W189 each bind FMN. Residue 195-197 (RMH) coordinates substrate. R199 lines the FMN pocket.

This sequence belongs to the pyridoxamine 5'-phosphate oxidase family. Homodimer. The cofactor is FMN.

It catalyses the reaction pyridoxamine 5'-phosphate + O2 + H2O = pyridoxal 5'-phosphate + H2O2 + NH4(+). The enzyme catalyses pyridoxine 5'-phosphate + O2 = pyridoxal 5'-phosphate + H2O2. It participates in cofactor metabolism; pyridoxal 5'-phosphate salvage; pyridoxal 5'-phosphate from pyridoxamine 5'-phosphate: step 1/1. The protein operates within cofactor metabolism; pyridoxal 5'-phosphate salvage; pyridoxal 5'-phosphate from pyridoxine 5'-phosphate: step 1/1. Catalyzes the oxidation of either pyridoxine 5'-phosphate (PNP) or pyridoxamine 5'-phosphate (PMP) into pyridoxal 5'-phosphate (PLP). This Sodalis glossinidius (strain morsitans) protein is Pyridoxine/pyridoxamine 5'-phosphate oxidase.